We begin with the raw amino-acid sequence, 421 residues long: Serine hydroxymethyltransferase (421 aa).

Residues Leu-121 and 125–127 each bind (6S)-5,6,7,8-tetrahydrofolate; that span reads GHL. Lys-229 is subject to N6-(pyridoxal phosphate)lysine.

Belongs to the SHMT family. As to quaternary structure, homodimer. Requires pyridoxal 5'-phosphate as cofactor.

The protein resides in the cytoplasm. The enzyme catalyses (6R)-5,10-methylene-5,6,7,8-tetrahydrofolate + glycine + H2O = (6S)-5,6,7,8-tetrahydrofolate + L-serine. Its pathway is one-carbon metabolism; tetrahydrofolate interconversion. It functions in the pathway amino-acid biosynthesis; glycine biosynthesis; glycine from L-serine: step 1/1. In terms of biological role, catalyzes the reversible interconversion of serine and glycine with tetrahydrofolate (THF) serving as the one-carbon carrier. This reaction serves as the major source of one-carbon groups required for the biosynthesis of purines, thymidylate, methionine, and other important biomolecules. Also exhibits THF-independent aldolase activity toward beta-hydroxyamino acids, producing glycine and aldehydes, via a retro-aldol mechanism. The sequence is that of Serine hydroxymethyltransferase from Haemophilus influenzae (strain PittGG).